Reading from the N-terminus, the 208-residue chain is Small ribosomal subunit protein uS4 (208 aa).

An S4 RNA-binding domain is found at 98–158; sequence RRLDNIAYRL…EKSRKVACIN (61 aa).

Belongs to the universal ribosomal protein uS4 family. Part of the 30S ribosomal subunit. Contacts protein S5. The interaction surface between S4 and S5 is involved in control of translational fidelity.

Its function is as follows. One of the primary rRNA binding proteins, it binds directly to 16S rRNA where it nucleates assembly of the body of the 30S subunit. With S5 and S12 plays an important role in translational accuracy. The polypeptide is Small ribosomal subunit protein uS4 (Geotalea uraniireducens (strain Rf4) (Geobacter uraniireducens)).